The following is a 2190-amino-acid chain: Non-reducing polyketide synthase mapC' (2190 aa).

Positions 14 to 268 are N-terminal acylcarrier protein transacylase domain (SAT); that stretch reads VLFGPQCPDI…HHEAHREGIQ (255 aa). The Ketosynthase family 3 (KS3) domain occupies 401 to 817; it reads ASPIAITGMA…GSNAALIVKE (417 aa). Catalysis depends on for beta-ketoacyl synthase activity residues cysteine 566, histidine 701, and histidine 740. Positions 893-1190 are malonyl-CoA:ACP transacylase (MAT) domain; it reads CFGGQNGLTA…NVTSALWAQG (298 aa). Serine 979 acts as the For acyl/malonyl transferase activity in catalysis. The interval 1243-1375 is N-terminal hotdog fold; the sequence is GQEAGLLCQL…GTVCLHQERS (133 aa). In terms of domain architecture, PKS/mFAS DH spans 1243-1552; sequence GQEAGLLCQL…FTSVSIRSLT (310 aa). Positions 1251 to 1556 are product template (PT) domain; the sequence is QLSESPDERL…SIRSLTRALA (306 aa). Catalysis depends on histidine 1277, which acts as the Proton acceptor; for dehydratase activity. The segment at 1401–1552 is C-terminal hotdog fold; that stretch reads ASNGLKGSTV…FTSVSIRSLT (152 aa). Aspartate 1458 acts as the Proton donor; for dehydratase activity in catalysis. The region spanning 1597–1671 is the Carrier domain; that stretch reads ANDLATVQEM…GLVEHIFPGH (75 aa). At serine 1631 the chain carries O-(pantetheine 4'-phosphoryl)serine. The tract at residues 1840-2187 is methyltransferase (CMeT) domain; that stretch reads ATMSPSKPIK…AEGYEFLRTH (348 aa). Catalysis depends on for thioesterase activity residues serine 1969, aspartate 2127, and histidine 2159.

It localises to the cytoplasm. Its subcellular location is the cytosol. It catalyses the reaction 3 malonyl-CoA + acetyl-CoA + S-adenosyl-L-methionine + H(+) = 5-methylorsellinate + S-adenosyl-L-homocysteine + 3 CO2 + 4 CoA. It participates in secondary metabolite biosynthesis; terpenoid biosynthesis. Functionally, non-reducing polyketide synthase; part of the gene cluster that mediates the biosynthesis of mycophenolic acid (MPA), the first isolated antibiotic natural product in the world obtained from a culture of Penicillium brevicompactum in 1893. MpaC' catalyzes the synthesis of 5-methylorsellinic acid (5MOA) via the condensation of 1 acetyl-CoA starter unit with 3 malonyl-CoA units and one methylation step. The first step of the pathway is the synthesis of 5-methylorsellinic acid (5MOA) by the cytosolic polyketide synthase mpaC. 5MOA is then converted to the phthalide compound 5,7-dihydroxy-4,6-dimethylphthalide (DHMP) by the endoplasmic reticulum-bound cytochrome P450 monooxygenase mpaDE. MpaDE first catalyzes hydroxylation of 5-MOA to 4,6-dihydroxy-2-(hydroxymethyl)-3-methylbenzoic acid (DHMB). MpaDE then acts as a lactone synthase that catalyzes the ring closure to convert DHMB into DHMP. The next step is the prenylation of DHMP by the Golgi apparatus-associated prenyltransferase mpaA to yield farnesyl-DHMP (FDHMP). The ER-bound oxygenase mpaB then mediates the oxidative cleavage the C19-C20 double bond in FDHMP to yield FDHMP-3C via a mycophenolic aldehyde intermediate. The O-methyltransferase mpaG catalyzes the methylation of FDHMP-3C to yield MFDHMP-3C. After the cytosolic methylation of FDHMP-3C, MFDHMP-3C enters into peroxisomes probably via free diffusion due to its low molecular weight. Upon a peroxisomal CoA ligation reaction, catalyzed by a beta-oxidation component enzyme acyl-CoA ligase ACL891, MFDHMP-3C-CoA would then be restricted to peroxisomes for the following beta-oxidation pathway steps. The peroxisomal beta-oxidation machinery than converts MFDHMP-3C-CoA into MPA_CoA, via a beta-oxidation chain-shortening process. Finally mpaH acts as a peroxisomal acyl-CoA hydrolase with high substrate specificity toward MPA-CoA to release the final product MPA. This chain is Non-reducing polyketide synthase mapC', found in Penicillium brevicompactum.